Consider the following 1295-residue polypeptide: MLSPAKCESEEAQAPLDLHSSSRSEPECLSLVLWCPNPEEAAPSSTRELIKLPDNGEMSLRRSTTLNCNSPEENGGEGRVSQRKSSRGKSQPLLMLTNGCQLRRSPRFRALHANFDNVCSVPVTKGGVSQRKFSRGKSQPLLTLTNGCQLRRSPRFRAVDGNFDSVCSVPVTGKFGSRKRKSNSALDKKESSDSEGLTFKDIAVIAKSLEMEIISECQYKNNVAEGRSRLQDPAKRKVDSDTLLYSSINSSKQSLGSNKRMRRSQRFMKGTENEGEENLGKSKGKGMSLASCSFRRSTRLSGTVETGNTETLNRRKDCGPALCGAEQVRGTERLVQISKKDHCCEAMKKCEGDGLVSSKQELLVFPSGCIKKTVNGCRDRTLGKPRSSGLNTDDIHTSSLKISKNDTSNGLTMTTALVEQDAMESLLQGKTSACGAADKGKTREMHVNSTVIYLSDSDEPSSIEYLNGDNLTQVESGSALSSGGNEGIVSLDLNNPTKSTKRKGKRVTRTAVQEQNKRSICFFIGEPLSCEEAQERWRWRYELKERKSKSRGQQSEDDEDKIVANVECHYSQAKVDGHTFSLGDFAYIKGEEEETHVGQIVEFFKTTDGESYFRVQWFYRATDTIMERQATNHDKRRLFYSTVMNDNPVDCLISKVTVLQVSPRVGLKPNSIKSDYYFDMEYCVEYSTFQTLRNPKTSENKLECCADVVPTESTESILKKKSFSGELPVLDLYSGCGGMSTGLSLGAKISGVDVVTKWAVDQNTAACKSLKLNHPNTQVRNDAAGDFLQLLKEWDKLCKRYVFNNDQRTDTLRSVNSTKETSGSSSSSDDDSDSEEYEVEKLVDICFGDHDKTGKNGLKFKVHWKGYRSDEDTWELAEELSNCQDAIREFVTSGFKSKILPLPGRVGVICGGPPCQGISGYNRHRNVDSPLNDERNQQIIVFMDIVEYLKPSYVLMENVVDILRMDKGSLGRYALSRLVNMRYQARLGIMTAGCYGLSQFRSRVFMWGAVPNKNLPPFPLPTHDVIVRYGLPLEFERNVVAYAEGQPRKLEKALVLKDAISDLPHVSNDEDREKLPYESLPKTDFQRYIRSTKRDLTGSAIDNCNKRTMLLHDHRPFHINEDDYARVCQIPKRKGANFRDLPGLIVRNNTVCRDPSMEPVILPSGKPLVPGYVFTFQQGKSKRPFARLWWDETVPTVLTVPTCHSQALLHPEQDRVLTIRESARLQGFPDYFQFCGTIKERYCQIGNAVAVSVSRALGYSLGMAFRGLARDEHLIKLPQNFSHSTYPQLQETIPH.

3 disordered regions span residues 1 to 23 (MLSPAKCESEEAQAPLDLHSSSR), 61 to 91 (RRSTTLNCNSPEENGGEGRVSQRKSSRGKSQ), and 249 to 287 (NSSKQSLGSNKRMRRSQRFMKGTENEGEENLGKSKGKGM). The segment covering 61-72 (RRSTTLNCNSPE) has biased composition (polar residues). A BAH domain is found at 578–693 (HTFSLGDFAY…VEYSTFQTLR (116 aa)). The region spanning 727 to 1268 (LPVLDLYSGC…YSLGMAFRGL (542 aa)) is the SAM-dependent MTase C5-type domain. A disordered region spans residues 814 to 835 (SVNSTKETSGSSSSSDDDSDSE). The Chromo domain occupies 837–902 (YEVEKLVDIC…SGFKSKILPL (66 aa)). The active site involves Cys-915.

This sequence belongs to the class I-like SAM-binding methyltransferase superfamily. C5-methyltransferase family.

Its subcellular location is the nucleus. It catalyses the reaction a 2'-deoxycytidine in DNA + S-adenosyl-L-methionine = a 5-methyl-2'-deoxycytidine in DNA + S-adenosyl-L-homocysteine + H(+). Its function is as follows. May be involved in the CpXpG methylation and in gene silencing. In Arabidopsis thaliana (Mouse-ear cress), this protein is DNA (cytosine-5)-methyltransferase CMT2 (CMT2).